Here is a 494-residue protein sequence, read N- to C-terminus: Cytochrome P450 71D94 (494 aa).

A helical; Signal-anchor for type II membrane protein transmembrane segment spans residues 1-21 (MELNLLLVIIILVATYTVSLL). Position 434 (C434) interacts with heme.

This sequence belongs to the cytochrome P450 family. It depends on heme as a cofactor.

The protein resides in the endoplasmic reticulum membrane. Functionally, cytochrome P450 oxygenase of undefined substrate. Not active with limonene, (+)- or (-)-piperitone, (-)-isopiperitone, piperitenone or (+)-pulegone. The protein is Cytochrome P450 71D94 (CYP71D94) of Mentha gracilis (Gingermint).